The chain runs to 334 residues: Nucleoid-associated protein VS_0951 (334 aa).

The protein belongs to the YejK family.

It is found in the cytoplasm. The protein resides in the nucleoid. The sequence is that of Nucleoid-associated protein VS_0951 from Vibrio atlanticus (strain LGP32) (Vibrio splendidus (strain Mel32)).